Reading from the N-terminus, the 993-residue chain is Importin subunit beta-5 (993 aa).

Residues 24 to 100 form the Importin N-terminal domain; the sequence is AELGLRDLEK…RETLLHLLVS (77 aa).

The protein resides in the nucleus. Required for nuclear protein import and mediates docking of import substrate to distinct nucleoporins. Serves a receptor for nuclear localization signals. Mediates the nuclear import of TATA-binding protein (TBP) and of histones H2A and H2B. The chain is Importin subunit beta-5 (kap114) from Schizosaccharomyces pombe (strain 972 / ATCC 24843) (Fission yeast).